Here is a 195-residue protein sequence, read N- to C-terminus: Pyridoxal 5'-phosphate synthase subunit PdxT (195 aa).

46–48 (GES) is a binding site for L-glutamine. Residue C78 is the Nucleophile of the active site. L-glutamine-binding positions include R107 and 136 to 137 (IR). Active-site charge relay system residues include H173 and E175.

It belongs to the glutaminase PdxT/SNO family. In terms of assembly, in the presence of PdxS, forms a dodecamer of heterodimers. Only shows activity in the heterodimer.

The enzyme catalyses aldehydo-D-ribose 5-phosphate + D-glyceraldehyde 3-phosphate + L-glutamine = pyridoxal 5'-phosphate + L-glutamate + phosphate + 3 H2O + H(+). It catalyses the reaction L-glutamine + H2O = L-glutamate + NH4(+). It functions in the pathway cofactor biosynthesis; pyridoxal 5'-phosphate biosynthesis. Its function is as follows. Catalyzes the hydrolysis of glutamine to glutamate and ammonia as part of the biosynthesis of pyridoxal 5'-phosphate. The resulting ammonia molecule is channeled to the active site of PdxS. In Dehalococcoides mccartyi (strain CBDB1), this protein is Pyridoxal 5'-phosphate synthase subunit PdxT.